The chain runs to 139 residues: FAD synthase (139 aa).

ATP contacts are provided by residues 8-9 (VF), 13-16 (HPGH), Asp92, and Tyr119.

Belongs to the archaeal FAD synthase family. In terms of assembly, homodimer. A divalent metal cation serves as cofactor.

It catalyses the reaction FMN + ATP + H(+) = FAD + diphosphate. The protein operates within cofactor biosynthesis; FAD biosynthesis; FAD from FMN: step 1/1. Catalyzes the transfer of the AMP portion of ATP to flavin mononucleotide (FMN) to produce flavin adenine dinucleotide (FAD) coenzyme. This Picrophilus torridus (strain ATCC 700027 / DSM 9790 / JCM 10055 / NBRC 100828 / KAW 2/3) protein is FAD synthase.